The chain runs to 352 residues: Holliday junction branch migration complex subunit RuvB (352 aa).

The interval T4–Y191 is large ATPase domain (RuvB-L). Residues L30, R31, G72, K75, T76, T77, E138–Y140, R181, Y191, and R228 contribute to the ATP site. Residue T76 coordinates Mg(2+). Residues T192–D262 are small ATPAse domain (RuvB-S). The segment at R265–E352 is head domain (RuvB-H). Residues R301, R320, and R325 each contribute to the DNA site.

Belongs to the RuvB family. In terms of assembly, homohexamer. Forms an RuvA(8)-RuvB(12)-Holliday junction (HJ) complex. HJ DNA is sandwiched between 2 RuvA tetramers; dsDNA enters through RuvA and exits via RuvB. An RuvB hexamer assembles on each DNA strand where it exits the tetramer. Each RuvB hexamer is contacted by two RuvA subunits (via domain III) on 2 adjacent RuvB subunits; this complex drives branch migration. In the full resolvosome a probable DNA-RuvA(4)-RuvB(12)-RuvC(2) complex forms which resolves the HJ.

It is found in the cytoplasm. It carries out the reaction ATP + H2O = ADP + phosphate + H(+). In terms of biological role, the RuvA-RuvB-RuvC complex processes Holliday junction (HJ) DNA during genetic recombination and DNA repair, while the RuvA-RuvB complex plays an important role in the rescue of blocked DNA replication forks via replication fork reversal (RFR). RuvA specifically binds to HJ cruciform DNA, conferring on it an open structure. The RuvB hexamer acts as an ATP-dependent pump, pulling dsDNA into and through the RuvAB complex. RuvB forms 2 homohexamers on either side of HJ DNA bound by 1 or 2 RuvA tetramers; 4 subunits per hexamer contact DNA at a time. Coordinated motions by a converter formed by DNA-disengaged RuvB subunits stimulates ATP hydrolysis and nucleotide exchange. Immobilization of the converter enables RuvB to convert the ATP-contained energy into a lever motion, pulling 2 nucleotides of DNA out of the RuvA tetramer per ATP hydrolyzed, thus driving DNA branch migration. The RuvB motors rotate together with the DNA substrate, which together with the progressing nucleotide cycle form the mechanistic basis for DNA recombination by continuous HJ branch migration. Branch migration allows RuvC to scan DNA until it finds its consensus sequence, where it cleaves and resolves cruciform DNA. In Cupriavidus pinatubonensis (strain JMP 134 / LMG 1197) (Cupriavidus necator (strain JMP 134)), this protein is Holliday junction branch migration complex subunit RuvB.